A 693-amino-acid polypeptide reads, in one-letter code: Pentatricopeptide repeat-containing protein At2g19280 (693 aa).

13 PPR repeats span residues 200–234 (LETV…GIFP), 235–269 (SRGV…GRHL), 270–304 (NAAV…GIRP), 305–339 (DIVA…GISQ), 340–370 (DSVS…FRLR), 372–406 (NIFV…GLLP), 407–441 (DCVC…GNPP), 442–476 (SLTT…GLKL), 477–511 (DVVT…GISP), 512–546 (DVAT…GFVP), 547–581 (STLA…RMKP), 582–616 (DVVT…GLKP), and 617–651 (DVVL…GMLP).

Belongs to the PPR family. P subfamily.

This chain is Pentatricopeptide repeat-containing protein At2g19280, found in Arabidopsis thaliana (Mouse-ear cress).